The following is a 51-amino-acid chain: Small ribosomal subunit protein uS14 (51 aa).

4 residues coordinate Zn(2+): C16, C19, C34, and C37.

It belongs to the universal ribosomal protein uS14 family. Zinc-binding uS14 subfamily. Part of the 30S ribosomal subunit. The cofactor is Zn(2+).

Its function is as follows. Binds 16S rRNA, required for the assembly of 30S particles. The chain is Small ribosomal subunit protein uS14 from Archaeoglobus fulgidus (strain ATCC 49558 / DSM 4304 / JCM 9628 / NBRC 100126 / VC-16).